We begin with the raw amino-acid sequence, 218 residues long: Small ribosomal subunit protein uS5 (218 aa).

Residues 66–129 (LKQELLNVNL…REAKLNLVPV (64 aa)) enclose the S5 DRBM domain.

The protein belongs to the universal ribosomal protein uS5 family. As to quaternary structure, part of the 30S ribosomal subunit. Contacts protein S4.

In terms of biological role, with S4 and S12 plays an important role in translational accuracy. In Pyrobaculum aerophilum (strain ATCC 51768 / DSM 7523 / JCM 9630 / CIP 104966 / NBRC 100827 / IM2), this protein is Small ribosomal subunit protein uS5.